Consider the following 709-residue polypeptide: Protein white (709 aa).

The segment at 1 to 35 is disordered; sequence MTINTDDQYADGESKTTISSNRRYSTSSFQDQSME. Residues 15-32 are compositionally biased toward polar residues; the sequence is KTTISSNRRYSTSSFQDQ. The region spanning 103–348 is the ABC transporter domain; the sequence is FTRQRLVKDF…SQLGIPCPPN (246 aa). ATP-binding positions include 136–143 and 292–299; these read GSSGAGKT and GMAMKGKT. A helical membrane pass occupies residues 457 to 475; the sequence is LLQTAMVASLIGSIYFGQV. N-linked (GlcNAc...) asparagine glycosylation occurs at asparagine 485. Helical transmembrane passes span 487-507, 537-555, 564-585, and 598-616; these read SLFL…INVF, LPLF…YPMI, YLTT…GYLI, and VGPP…FLNS. N-linked (GlcNAc...) asparagine glycosylation is present at asparagine 658. Residues 681–700 form a helical membrane-spanning segment; sequence LDIGCLFALIVLFRLGALFC.

It belongs to the ABC transporter superfamily. ABCG family. Eye pigment precursor importer (TC 3.A.1.204) subfamily.

It localises to the membrane. Functionally, may be part of a membrane-spanning permease system necessary for the transport of pigment precursors into pigment cells responsible for eye color. The chain is Protein white (W) from Anopheles albimanus (New world malaria mosquito).